Here is a 410-residue protein sequence, read N- to C-terminus: Probable nicotinate phosphoribosyltransferase (410 aa).

Nicotinate-binding residues include Tyr-15, Phe-170, and Thr-220. Position 223 is a phosphohistidine (His-223). Residue Thr-348 coordinates 5-phospho-alpha-D-ribose 1-diphosphate.

It belongs to the NAPRTase family. The cofactor is Mg(2+). Requires Mn(2+) as cofactor. Post-translationally, transiently phosphorylated on a His residue during the reaction cycle. Phosphorylation strongly increases the affinity for substrates and increases the rate of nicotinate D-ribonucleotide production. Dephosphorylation regenerates the low-affinity form of the enzyme, leading to product release.

It catalyses the reaction nicotinate + 5-phospho-alpha-D-ribose 1-diphosphate + ATP + H2O = nicotinate beta-D-ribonucleotide + ADP + phosphate + diphosphate. It participates in cofactor biosynthesis; NAD(+) biosynthesis; nicotinate D-ribonucleotide from nicotinate: step 1/1. Its function is as follows. Catalyzes the first step in the biosynthesis of NAD from nicotinic acid, the ATP-dependent synthesis of beta-nicotinate D-ribonucleotide from nicotinate and 5-phospho-D-ribose 1-phosphate. Helps prevent cellular oxidative stress via its role in NAD biosynthesis. The polypeptide is Probable nicotinate phosphoribosyltransferase (Schizosaccharomyces pombe (strain 972 / ATCC 24843) (Fission yeast)).